Here is a 485-residue protein sequence, read N- to C-terminus: Glycogen synthase (485 aa).

Lys-15 contacts ADP-alpha-D-glucose.

This sequence belongs to the glycosyltransferase 1 family. Bacterial/plant glycogen synthase subfamily.

It carries out the reaction [(1-&gt;4)-alpha-D-glucosyl](n) + ADP-alpha-D-glucose = [(1-&gt;4)-alpha-D-glucosyl](n+1) + ADP + H(+). Its pathway is glycan biosynthesis; glycogen biosynthesis. Its function is as follows. Synthesizes alpha-1,4-glucan chains using ADP-glucose. The sequence is that of Glycogen synthase from Fervidobacterium nodosum (strain ATCC 35602 / DSM 5306 / Rt17-B1).